The following is a 212-amino-acid chain: MLFFIDTANIDEIKEAYELGVLAGVTTNPSLVAKEADVSFHDRLREITEVVSGSVSAEVISLNAEEMIEEGKELAKIAPNITVKIPMTSEGLKAVKALSDLNIKTNVTLIFSANQALLAARAGATYVSPFLGRLDDIGHNGLELISEIRQIFDIHDIDTQIIAASIRHAQHVTEAALRGAHIGTMPLKVIHQLAKHPLTDKGIEQFLADWNK.

Catalysis depends on K84, which acts as the Schiff-base intermediate with substrate.

This sequence belongs to the transaldolase family. Type 3B subfamily.

It localises to the cytoplasm. It carries out the reaction D-sedoheptulose 7-phosphate + D-glyceraldehyde 3-phosphate = D-erythrose 4-phosphate + beta-D-fructose 6-phosphate. It participates in carbohydrate degradation; pentose phosphate pathway; D-glyceraldehyde 3-phosphate and beta-D-fructose 6-phosphate from D-ribose 5-phosphate and D-xylulose 5-phosphate (non-oxidative stage): step 2/3. Its function is as follows. Transaldolase is important for the balance of metabolites in the pentose-phosphate pathway. The sequence is that of Probable transaldolase from Bacillus velezensis (strain DSM 23117 / BGSC 10A6 / LMG 26770 / FZB42) (Bacillus amyloliquefaciens subsp. plantarum).